Reading from the N-terminus, the 643-residue chain is RNA-binding protein MEX3D (643 aa).

Disordered stretches follow at residues 1–48 (MPGS…DAAA) and 61–92 (GLGG…APPD). Over residues 18–34 (TAGDPGHPHPALAGAED) the composition is skewed to low complexity. A compositionally biased stretch (acidic residues) spans 83–92 (CGEDEPAPPD). 2 KH domains span residues 160 to 221 (MTEC…KREI) and 253 to 314 (QTTI…REEI). Disordered stretches follow at residues 357–427 (PHPG…GTAT), 471–505 (GAPA…GGLS), and 519–583 (VGAV…APGP). Residues 405-418 (GGSGNGGFTFGGDG) are compositionally biased toward gly residues. The residue at position 491 (T491) is a Phosphothreonine. A Phosphoserine modification is found at S495. Low complexity-rich tracts occupy residues 495–505 (SPTLPEPGGLS), 531–556 (LPPF…SSTL), and 567–583 (PSTT…APGP). An RING-type zinc finger spans residues 592–632 (CVVCSEGEAMAALVPCGHNLFCMDCAVRICGKSEPECPACR).

The protein resides in the cytoplasm. It localises to the nucleus. Its function is as follows. RNA binding protein, may be involved in post-transcriptional regulatory mechanisms. The polypeptide is RNA-binding protein MEX3D (Mex3d) (Mus musculus (Mouse)).